Here is a 132-residue protein sequence, read N- to C-terminus: Nucleoid-associated protein EspR (132 aa).

A DNA-binding region (H-T-H motif) is located at residues 38–50 (ITMSAPYLSQLRS).

In terms of assembly, homodimer. Binds DNA as a dimer of dimers.

It localises to the cytoplasm. Its subcellular location is the nucleoid. Virulence regulator that has both architectural and regulatory roles. Impacts cell wall functions and pathogenesis through regulation of multiple genes. This chain is Nucleoid-associated protein EspR, found in Mycobacterium tuberculosis (strain CDC 1551 / Oshkosh).